Here is an 889-residue protein sequence, read N- to C-terminus: Putative receptor-like protein kinase At3g46340 (889 aa).

The signal sequence occupies residues 1-25 (MEFPHSVLLVVLIIATFAISNLVQA). The Extracellular segment spans residues 26-514 (EEDQEGFISL…VITKKKFPVM (489 aa)). N-linked (GlcNAc...) asparagine glycosylation is found at asparagine 185, asparagine 239, asparagine 259, asparagine 292, asparagine 316, asparagine 342, asparagine 366, asparagine 419, asparagine 435, asparagine 448, asparagine 467, and asparagine 474. 3 LRR repeats span residues 414–437 (RITSLNLSSTGLTGNIAAGIQNLT), 438–460 (HLDKLDLSNNNLTGGVPEFLASM), and 462–483 (SLSFINLSKNNLNGSIPQALLK). A helical membrane pass occupies residues 515 to 535 (IVALVSSAVVVILVVLVLIFV). Residues 536–889 (FKKKKPSNLE…FDTKAVPSAR (354 aa)) are Cytoplasmic-facing. Residues 544–566 (LEDLPPSSNTPRENITSTSISDT) are disordered. Positions 585–874 (KNLQRPLGEG…TQGMDSHSSF (290 aa)) constitute a Protein kinase domain. ATP is bound by residues 591-599 (LGEGGFGVV) and lysine 614. At tyrosine 659 the chain carries Phosphotyrosine. Aspartate 711 acts as the Proton acceptor in catalysis. Serine 745 is modified (phosphoserine). Phosphothreonine occurs at positions 746 and 751. Tyrosine 759 is subject to Phosphotyrosine. The tract at residues 863-889 (NKTQGMDSHSSFEQSMSFDTKAVPSAR) is disordered. Residues 864 to 880 (KTQGMDSHSSFEQSMSF) are compositionally biased toward polar residues.

The protein belongs to the protein kinase superfamily. Ser/Thr protein kinase family.

It localises to the cell membrane. It catalyses the reaction L-seryl-[protein] + ATP = O-phospho-L-seryl-[protein] + ADP + H(+). It carries out the reaction L-threonyl-[protein] + ATP = O-phospho-L-threonyl-[protein] + ADP + H(+). The chain is Putative receptor-like protein kinase At3g46340 from Arabidopsis thaliana (Mouse-ear cress).